The following is a 598-amino-acid chain: Elongation factor 4 (598 aa).

The 182-residue stretch at 4–185 folds into the tr-type G domain; sequence KNIRNFSIIA…TIIAKIPPPK (182 aa). Residues 16-21 and 132-135 each bind GTP; these read DHGKST and NKID.

The protein belongs to the TRAFAC class translation factor GTPase superfamily. Classic translation factor GTPase family. LepA subfamily.

Its subcellular location is the cell membrane. It catalyses the reaction GTP + H2O = GDP + phosphate + H(+). Required for accurate and efficient protein synthesis under certain stress conditions. May act as a fidelity factor of the translation reaction, by catalyzing a one-codon backward translocation of tRNAs on improperly translocated ribosomes. Back-translocation proceeds from a post-translocation (POST) complex to a pre-translocation (PRE) complex, thus giving elongation factor G a second chance to translocate the tRNAs correctly. Binds to ribosomes in a GTP-dependent manner. The chain is Elongation factor 4 from Mycoplasma genitalium (strain ATCC 33530 / DSM 19775 / NCTC 10195 / G37) (Mycoplasmoides genitalium).